The chain runs to 429 residues: UPF0242 protein CT_616 (429 aa).

Belongs to the UPF0242 family.

This is UPF0242 protein CT_616 from Chlamydia trachomatis serovar D (strain ATCC VR-885 / DSM 19411 / UW-3/Cx).